Here is a 309-residue protein sequence, read N- to C-terminus: Taste receptor type 2 member 20 (309 aa).

Residues 1-6 lie on the Extracellular side of the membrane; sequence MMSFLH. Residues 7 to 27 traverse the membrane as a helical segment; the sequence is IVFSILVVVAFILGNFANGFI. At 28–46 the chain is on the cytoplasmic side; sequence ALINFIAWVKRQKISSADQ. A helical transmembrane segment spans residues 47–67; sequence IIAALAVSRVGLLWVILLHWY. Over 68–79 the chain is Extracellular; that stretch reads STVLNPTSSNLK. A helical transmembrane segment spans residues 80-100; the sequence is VIIFISNAWAVTNHFSIWLAT. Over 101-125 the chain is Cytoplasmic; it reads SLSIFYLLKIVNFSRLIFHHLKRKA. The chain crosses the membrane as a helical span at residues 126-146; it reads KSVVLVIVLGSLFFLVCXLVM. At 147–178 the chain is on the extracellular side; sequence KNTYINVWTEECEGNVTWKIKLRNAMHLSNLT. Residues 179 to 199 form a helical membrane-spanning segment; the sequence is VAMLANLIPFTLTLISFLLLI. The Cytoplasmic segment spans residues 200–229; that stretch reads YSLCKHLKKMQLHGKGSQDPSTKIHIKALQ. The chain crosses the membrane as a helical span at residues 230–250; it reads TVTSFLILLAIYFLCLITSFW. The Extracellular portion of the chain corresponds to 251–259; sequence NSKMRPKEI. The helical transmembrane segment at 260–280 threads the bilayer; it reads VLMLCQAFGIIYPSFHSFILI. Topologically, residues 281-309 are cytoplasmic; it reads WGNKTLKQTFLSVLWQVTCWAKGQNQSTP.

It belongs to the G-protein coupled receptor T2R family.

It is found in the membrane. Functionally, receptor that may play a role in the perception of bitterness and is gustducin-linked. May play a role in sensing the chemical composition of the gastrointestinal content. The activity of this receptor may stimulate alpha gustducin, mediate PLC-beta-2 activation and lead to the gating of TRPM5. The polypeptide is Taste receptor type 2 member 20 (TAS2R20) (Pan troglodytes (Chimpanzee)).